The sequence spans 420 residues: RING finger protein 39 (420 aa).

An RING-type zinc finger spans residues 88–135; the sequence is CPLCGGSFEDPVLLACEHSFCRACLARRWGTPPATDTEASPTACPCCG. 2 disordered regions span residues 166–186 and 246–265; these read PGAR…CLDP and DRRS…DGPK. The B30.2/SPRY domain maps to 210-420; the sequence is DDLPEDYPVV…APLRIVPAES (211 aa).

The protein localises to the cytoplasm. It catalyses the reaction S-ubiquitinyl-[E2 ubiquitin-conjugating enzyme]-L-cysteine + [acceptor protein]-L-lysine = [E2 ubiquitin-conjugating enzyme]-L-cysteine + N(6)-ubiquitinyl-[acceptor protein]-L-lysine.. Its pathway is protein modification; protein ubiquitination. In terms of biological role, plays an inhibitory role in anti-RNA viral innate immunity by targeting the adapter DDX3X and promoting its 'Lys-48'-linked polyubiquitination. Alternatively, enhances the cGAS-STING pathway activation by promoting 'Lys-63'-linked ubiquitination of STING1, facilitating the STING1-TBK1 complex formation and STING1 activation. The protein is RING finger protein 39 (RNF39) of Macaca mulatta (Rhesus macaque).